A 116-amino-acid chain; its full sequence is Large ribosomal subunit protein bL17 (116 aa).

The protein belongs to the bacterial ribosomal protein bL17 family. As to quaternary structure, part of the 50S ribosomal subunit. Contacts proteins L3 and L32.

Functionally, binds to the 23S rRNA. The sequence is that of Large ribosomal subunit protein bL17 from Deinococcus radiodurans (strain ATCC 13939 / DSM 20539 / JCM 16871 / CCUG 27074 / LMG 4051 / NBRC 15346 / NCIMB 9279 / VKM B-1422 / R1).